The primary structure comprises 229 residues: NAD(P)H-hydrate epimerase (229 aa).

Residues A9–L216 enclose the YjeF N-terminal domain. N59–D63 is a binding site for (6S)-NADPHX. Residues N60 and D124 each contribute to the K(+) site. (6S)-NADPHX contacts are provided by residues G128 to P134 and D157. A K(+)-binding site is contributed by S160.

This sequence belongs to the NnrE/AIBP family. K(+) is required as a cofactor.

It catalyses the reaction (6R)-NADHX = (6S)-NADHX. The enzyme catalyses (6R)-NADPHX = (6S)-NADPHX. In terms of biological role, catalyzes the epimerization of the S- and R-forms of NAD(P)HX, a damaged form of NAD(P)H that is a result of enzymatic or heat-dependent hydration. This is a prerequisite for the S-specific NAD(P)H-hydrate dehydratase to allow the repair of both epimers of NAD(P)HX. The protein is NAD(P)H-hydrate epimerase of Anopheles gambiae (African malaria mosquito).